A 399-amino-acid polypeptide reads, in one-letter code: Glycosyltransferase BC10 (399 aa).

Residues 1 to 17 lie on the Cytoplasmic side of the membrane; the sequence is MKPPRRWMYGRGGGKGK. Residues 18 to 38 form a helical; Signal-anchor for type II membrane protein membrane-spanning segment; the sequence is PAGLLLLGVFLCLSVVLLLLL. At 39-399 the chain is on the lumenal side; it reads HGSSPSLEGE…LIAANGASTM (361 aa). N-linked (GlcNAc...) asparagine glycans are attached at residues N142 and N188.

Belongs to the glycosyltransferase 14 family. Expressed in roots, culms, leaves and panicles. Expressed in vascular bundles of leaf sheaths and stems where sclerenchyma cells are developing. Expressed in mechanical tissues of young organs, such as young leaf sheaths, stems and tiller buds.

It is found in the membrane. Functionally, glycosyltransferase required for the regulation of cellulose biosynthesis in the cell wall. Required for the biosynthesis of hexoses (glucose, mannose and galactose) in both cellulosic and non-cellulosic (pectins and hemicelluloses) components of cell walls. Required for the formation of arabinogalactan proteins which contribute to the strengthening of cell walls. Possesses low glycosyltransferase activity. The sequence is that of Glycosyltransferase BC10 from Oryza sativa subsp. japonica (Rice).